We begin with the raw amino-acid sequence, 471 residues long: Uronate isomerase (471 aa).

It belongs to the metallo-dependent hydrolases superfamily. Uronate isomerase family.

It catalyses the reaction D-glucuronate = D-fructuronate. The catalysed reaction is aldehydo-D-galacturonate = keto-D-tagaturonate. Its pathway is carbohydrate metabolism; pentose and glucuronate interconversion. This chain is Uronate isomerase, found in Xanthomonas campestris pv. campestris (strain B100).